The primary structure comprises 1194 residues: Cohesin subunit SA-2 (1194 aa).

The 86-residue stretch at 224–309 (FVHRYRDAIA…SRFKDRIVSM (86 aa)) folds into the SCD domain. A disordered region spans residues 986–1027 (DTMSVMSGMSGRGSSTRSKKIKPPTGKRKLPEAEESSSSDSM). Low complexity predominate over residues 988–1001 (MSVMSGMSGRGSST). Over residues 1002–1013 (RSKKIKPPTGKR) the composition is skewed to basic residues.

It belongs to the SCC3 family. Part of the cohesin complex which is composed of a heterodimer between a SMC1 protein (SMC1A or SMC1B) and SMC3, which are attached via their hinge domain, and RAD21 which link them at their heads, and one STAG protein (STAG1, STAG2 or STAG3). In cohesin complexes, STAG2 is mutually exclusive with STAG1 and STAG3. Interacts directly with RAD21 in cohesin complex. Phosphorylated by PLK1. The large dissociation of cohesin from chromosome arms during prophase is partly due to its phosphorylation.

Its subcellular location is the nucleus. The protein resides in the chromosome. It localises to the centromere. Its function is as follows. Component of cohesin complex, a complex required for the cohesion of sister chromatids after DNA replication. The cohesin complex apparently forms a large proteinaceous ring within which sister chromatids can be trapped. At anaphase, the complex is cleaved and dissociates from chromatin, allowing sister chromatids to segregate. The cohesin complex may also play a role in spindle pole assembly during mitosis. This Xenopus laevis (African clawed frog) protein is Cohesin subunit SA-2 (stag2).